The sequence spans 266 residues: Movement protein (266 aa).

Residues 212–227 (KTKKGKKRKKEKKKRV) are compositionally biased toward basic residues. The tract at residues 212 to 266 (KTKKGKKRKKEKKKRVVGNSVNNKKINNSGKKGLKVEEIEDNVSDDESIASSSTF) is disordered. Residues 228-242 (VGNSVNNKKINNSGK) are compositionally biased toward low complexity. Positions 249–259 (EIEDNVSDDES) are enriched in acidic residues.

This sequence belongs to the tobamovirus movement protein family.

The protein localises to the host cytoplasm. Its subcellular location is the host cytoskeleton. It localises to the host cell junction. The protein resides in the host plasmodesma. In terms of biological role, transports viral genome to neighboring plant cells directly through plasmosdesmata, without any budding. The movement protein allows efficient cell to cell propagation, by bypassing the host cell wall barrier. Forms a ribonucleoprotein complex with viral RNA. Binds microtubules and modulates microtubule stability. Can bind double-stranded DNA. The sequence is that of Movement protein (MP) from Capsicum annuum (Capsicum pepper).